The primary structure comprises 193 residues: 3-isopropylmalate dehydratase small subunit (193 aa).

It belongs to the LeuD family. LeuD type 1 subfamily. Heterodimer of LeuC and LeuD.

It carries out the reaction (2R,3S)-3-isopropylmalate = (2S)-2-isopropylmalate. It functions in the pathway amino-acid biosynthesis; L-leucine biosynthesis; L-leucine from 3-methyl-2-oxobutanoate: step 2/4. Functionally, catalyzes the isomerization between 2-isopropylmalate and 3-isopropylmalate, via the formation of 2-isopropylmaleate. The polypeptide is 3-isopropylmalate dehydratase small subunit (Bacillus cereus (strain AH820)).